The primary structure comprises 86 residues: Putative pro-MCH-like protein 2 (86 aa).

The tract at residues 31–49 is NGE-like; that stretch reads GSVAFPAENGVQDTESTLE. The tract at residues 40 to 60 is disordered; that stretch reads GVQDTESTLEKRETGDEENSA. Residues 52 to 64 form an NEI-like region; that stretch reads ETGDEENSAKFPI. A melanin-concentrating hormone-like region spans residues 68 to 86; that stretch reads DFDTLRCMLGRVYQRCWQV.

The protein belongs to the melanin-concentrating hormone family. In terms of tissue distribution, expressed in testis but not in brain.

In Homo sapiens (Human), this protein is Putative pro-MCH-like protein 2 (PMCHL2).